The primary structure comprises 258 residues: tRNA pseudouridine synthase A (258 aa).

The active-site Nucleophile is Asp-53. Tyr-111 serves as a coordination point for substrate.

This sequence belongs to the tRNA pseudouridine synthase TruA family. In terms of assembly, homodimer.

The enzyme catalyses uridine(38/39/40) in tRNA = pseudouridine(38/39/40) in tRNA. Its function is as follows. Formation of pseudouridine at positions 38, 39 and 40 in the anticodon stem and loop of transfer RNAs. The protein is tRNA pseudouridine synthase A of Streptococcus agalactiae serotype V (strain ATCC BAA-611 / 2603 V/R).